Reading from the N-terminus, the 40-residue chain is Antimicrobial peptide 1 (40 aa).

The Chitin-binding type-1 domain occupies 1-40 (AQCGAQGGGATCPGGLCCSQWGWCGSTPKYCGAGCQSNCK). Cystine bridges form between Cys3–Cys18, Cys12–Cys24, Cys17–Cys31, and Cys35–Cys39.

Post-translationally, not glycosylated.

Functionally, antimicrobial peptide active against plant pathogenic fungi and Gram-negative and -positive bacteria. The sequence is that of Antimicrobial peptide 1 from Fagopyrum esculentum (Common buckwheat).